A 213-amino-acid chain; its full sequence is Glutathione S-transferase APIC (213 aa).

Residues 1 to 82 enclose the GST N-terminal domain; sequence MAIKVHGSPM…YIAHVYADNG (82 aa). Residues serine 11, 12–13, 40–41, 53–54, and 66–67 each bind glutathione; these read TA, HK, QV, and ES. A GST C-terminal domain is found at 89-213; the sequence is DPKKMPIMSV…WVKGLEKLQK (125 aa).

It belongs to the GST superfamily. Phi family.

It carries out the reaction RX + glutathione = an S-substituted glutathione + a halide anion + H(+). In terms of biological role, conjugation of reduced glutathione to a wide number of exogenous and endogenous hydrophobic electrophiles. In Nicotiana tabacum (Common tobacco), this protein is Glutathione S-transferase APIC.